The sequence spans 857 residues: ATP-dependent RNA helicase DDX24 (857 aa).

Residues 61-179 are disordered; the sequence is NPSRLFSSEE…SPKLPKKSKK (119 aa). A phosphoserine mark is found at Ser80 and Ser92. A compositionally biased stretch (basic residues) spans 152 to 161; that stretch reads PRKKKNKGKK. Position 170 is a phosphoserine (Ser170). Positions 193-221 match the Q motif motif; it reads SAWRDLFVPKAVLRALSFLGFSAPTPIQA. The Helicase ATP-binding domain maps to 225–528; it reads APAIRDKLDI…RILHKKHVKK (304 aa). 238-245 lines the ATP pocket; sequence AETGSGKT. Residues 279–363 are disordered; it reads RFGATAHLGS…NEDGEEKFDA (85 aa). A phosphoserine mark is found at Ser288 and Ser296. Residues 290-307 are compositionally biased toward basic and acidic residues; it reads CKDRTESGVLPEEARIET. Residues 309–330 are compositionally biased toward polar residues; the sequence is AQPSDSGVQATPETSASASAQT. Basic and acidic residues predominate over residues 345–363; the sequence is LEEKPVPKQNEDGEEKFDA. Lys370 participates in a covalent cross-link: Glycyl lysine isopeptide (Lys-Gly) (interchain with G-Cter in SUMO2). The DEAD box motif lies at 471 to 474; sequence DEAD. Residues 576–723 enclose the Helicase C-terminal domain; sequence DLYLYYFLMQ…LFPVQSKYMD (148 aa). A Glycyl lysine isopeptide (Lys-Gly) (interchain with G-Cter in SUMO2) cross-link involves residue Lys624. Positions 808 to 857 are disordered; the sequence is RYPTQSGRPPQPVLASRNIESALSCLSRQKRRRKKPKEPRAPPQPGSSTS. The segment covering 825 to 834 has biased composition (polar residues); it reads NIESALSCLS. Basic residues predominate over residues 835 to 844; it reads RQKRRRKKPK. Residues 848 to 857 show a composition bias toward pro residues; it reads APPQPGSSTS.

This sequence belongs to the DEAD box helicase family. DDX24/MAK5 subfamily. In terms of assembly, interacts with FADD. Interacts with RIPK1; this interaction disrupts RLR signaling activation of IFN-dependent transcription factor IRF7. Interacts with NIP7. Interacts with EP300; this interaction prevents TP53 acetylation mediated by EP300. Ubiquitinated by MDM2 without targeting DDX24 for proteasomal degradation. Instead, polyubiquitylated DDX24 promotes interaction with NIP7, a component of pre-rRNP processing complex, and associates with pre-rRNA molecules and pre-ribosomal particles.

It localises to the cytoplasm. Its subcellular location is the nucleus. The enzyme catalyses ATP + H2O = ADP + phosphate + H(+). Its function is as follows. ATP-dependent RNA helicase that plays a role in various aspects of RNA metabolism including pre-mRNA splicing and is thereby involved in different biological processes such as cell cycle regulation or innate immunity. Plays an inhibitory role in TP53 transcriptional activity and subsequently in TP53 controlled cell growth arrest and senescence by inhibiting its EP300 mediated acetylation. Negatively regulates cytosolic RNA-mediated innate immune signaling at least in part by affecting RIPK1/IRF7 interactions. Alternatively, possesses antiviral activity by recognizing gammaherpesvirus transcripts in the context of lytic reactivation. Plays an essential role in cell cycle regulation in vascular smooth muscle cells by interacting with and regulating FANCA (Fanconi anemia complementation group A) mRNA. The protein is ATP-dependent RNA helicase DDX24 (Ddx24) of Mus musculus (Mouse).